The following is a 148-amino-acid chain: Large ribosomal subunit protein bL9 (148 aa).

This sequence belongs to the bacterial ribosomal protein bL9 family.

Functionally, binds to the 23S rRNA. This is Large ribosomal subunit protein bL9 from Pseudomonas fluorescens (strain ATCC BAA-477 / NRRL B-23932 / Pf-5).